The following is a 272-amino-acid chain: Indole-3-glycerol phosphate synthase (272 aa).

This sequence belongs to the TrpC family.

The enzyme catalyses 1-(2-carboxyphenylamino)-1-deoxy-D-ribulose 5-phosphate + H(+) = (1S,2R)-1-C-(indol-3-yl)glycerol 3-phosphate + CO2 + H2O. It functions in the pathway amino-acid biosynthesis; L-tryptophan biosynthesis; L-tryptophan from chorismate: step 4/5. The sequence is that of Indole-3-glycerol phosphate synthase from Mycobacterium sp. (strain JLS).